A 309-amino-acid chain; its full sequence is Biotin synthase (309 aa).

Positions 35–259 constitute a Radical SAM core domain; that stretch reads NKIQISSLLS…MIPKSYIRLS (225 aa). Residues cysteine 50, cysteine 54, and cysteine 57 each coordinate [4Fe-4S] cluster. [2Fe-2S] cluster contacts are provided by cysteine 94, cysteine 125, cysteine 185, and arginine 257.

The protein belongs to the radical SAM superfamily. Biotin synthase family. In terms of assembly, homodimer. Requires [4Fe-4S] cluster as cofactor. [2Fe-2S] cluster is required as a cofactor.

The enzyme catalyses (4R,5S)-dethiobiotin + (sulfur carrier)-SH + 2 reduced [2Fe-2S]-[ferredoxin] + 2 S-adenosyl-L-methionine = (sulfur carrier)-H + biotin + 2 5'-deoxyadenosine + 2 L-methionine + 2 oxidized [2Fe-2S]-[ferredoxin]. The protein operates within cofactor biosynthesis; biotin biosynthesis; biotin from 7,8-diaminononanoate: step 2/2. Catalyzes the conversion of dethiobiotin (DTB) to biotin by the insertion of a sulfur atom into dethiobiotin via a radical-based mechanism. The sequence is that of Biotin synthase from Rickettsia felis (strain ATCC VR-1525 / URRWXCal2) (Rickettsia azadi).